We begin with the raw amino-acid sequence, 1004 residues long: Bifunctional glutamine synthetase adenylyltransferase/adenylyl-removing enzyme (1004 aa).

The tract at residues 1–497 is adenylyl removase; the sequence is MCCTTVVVVR…LHAKLFYQPL (497 aa). The segment at 502–1004 is adenylyl transferase; it reads GPASLEIRHG…KTFVRKVFGS (503 aa).

It belongs to the GlnE family. Requires Mg(2+) as cofactor.

It carries out the reaction [glutamine synthetase]-O(4)-(5'-adenylyl)-L-tyrosine + phosphate = [glutamine synthetase]-L-tyrosine + ADP. The enzyme catalyses [glutamine synthetase]-L-tyrosine + ATP = [glutamine synthetase]-O(4)-(5'-adenylyl)-L-tyrosine + diphosphate. Functionally, involved in the regulation of glutamine synthetase GlnA, a key enzyme in the process to assimilate ammonia. When cellular nitrogen levels are high, the C-terminal adenylyl transferase (AT) inactivates GlnA by covalent transfer of an adenylyl group from ATP to specific tyrosine residue of GlnA, thus reducing its activity. Conversely, when nitrogen levels are low, the N-terminal adenylyl removase (AR) activates GlnA by removing the adenylyl group by phosphorolysis, increasing its activity. The regulatory region of GlnE binds the signal transduction protein PII (GlnB) which indicates the nitrogen status of the cell. The sequence is that of Bifunctional glutamine synthetase adenylyltransferase/adenylyl-removing enzyme from Mycobacterium leprae (strain TN).